The following is a 1472-amino-acid chain: Gag-Pol polyprotein (1472 aa).

G2 carries the N-myristoyl glycine; by host lipid modification. Positions 16 to 22 match the Nuclear export signal motif; the sequence is FEKIRLR. The Nuclear localization signal signature appears at 26 to 32; sequence KKKYQIK. 2 disordered regions span residues 115-135 and 215-234; these read EKAA…SRNY and DRTH…RDPT. At Y135 the chain carries Phosphotyrosine; by host. 2 consecutive CCHC-type zinc fingers follow at residues 390–407 and 411–428; these read LKCF…ECKA and IKCF…DCKN. Positions 454-500 are disordered; that stretch reads HSWSGTNSPPNGNSLRSSKEAPPAVCREGTAPERGERTDKETEGERS. Over residues 456 to 469 the composition is skewed to polar residues; it reads WSGTNSPPNGNSLR. The span at 483 to 499 shows a compositional bias: basic and acidic residues; sequence TAPERGERTDKETEGER. The Peptidase A2 domain occupies 524–597; that stretch reads VQALLDTGAD…TPINIIGRNI (74 aa). D529 (for protease activity; shared with dimeric partner) is an active-site residue. The region spanning 653 to 843 is the Reverse transcriptase domain; that stretch reads EGKLSRIGGE…PPWEWMGYKL (191 aa). The Mg(2+) site is built by D719, D794, and D795. Residues 836-844 are RT 'primer grip'; sequence WEWMGYKLH. The Tryptophan repeat motif signature appears at 1007–1023; sequence WDMWWQDYWQVSWIPEW. The 124-residue stretch at 1043-1166 folds into the RNase H type-1 domain; it reads IKGEDVYYVD…IDKLVSKGIR (124 aa). D1052, E1087, D1107, and D1158 together coordinate Mg(2+). An Integrase-type zinc finger spans residues 1172-1213; the sequence is DRIEEAQDDHAKYHNNWRSMVQEFGLPNIVAKEIVAACPKCQ. H1181, H1185, C1209, and C1212 together coordinate Zn(2+). Positions 1223 to 1373 constitute an Integrase catalytic domain; it reads VDASIETWQM…SSAERLVNML (151 aa). 2 residues coordinate Mg(2+): D1233 and D1285. A DNA-binding region (integrase-type) is located at residues 1392–1439; it reads FKVYYREGRDPVWKGPARLIWKGEGAVVIKEGEDIKVVPRRKAKIIKD. Residues 1440 to 1472 are disordered; sequence YGERKTMDSEGSMEGVREANKQMEGDSDLQDQE. Positions 1454-1463 are enriched in basic and acidic residues; that stretch reads GVREANKQME.

As to quaternary structure, homotrimer. Interacts with gp41 (via C-terminus). Homodimer. The active site consists of two apposed aspartic acid residues. In terms of assembly, heterodimer of p66 RT and p51 RT (RT p66/p51). Heterodimerization of RT is essential for DNA polymerase activity. Despite the sequence identities, p66 RT and p51 RT have distinct folding. As to quaternary structure, homotetramer; may further associate as a homohexadecamer. Mg(2+) is required as a cofactor. Specific enzymatic cleavages by the viral protease yield mature proteins. The protease is released by autocatalytic cleavage. The polyprotein is cleaved during and after budding, this process is termed maturation. Proteolytic cleavage of p66 RT removes the RNase H domain to yield the p51 RT subunit. Post-translationally, capsid protein p24 is phosphorylated.

The protein localises to the virion. It is found in the host nucleus. It localises to the host cytoplasm. The protein resides in the host cell membrane. The catalysed reaction is Specific for a P1 residue that is hydrophobic, and P1' variable, but often Pro.. It carries out the reaction Endohydrolysis of RNA in RNA/DNA hybrids. Three different cleavage modes: 1. sequence-specific internal cleavage of RNA. Human immunodeficiency virus type 1 and Moloney murine leukemia virus enzymes prefer to cleave the RNA strand one nucleotide away from the RNA-DNA junction. 2. RNA 5'-end directed cleavage 13-19 nucleotides from the RNA end. 3. DNA 3'-end directed cleavage 15-20 nucleotides away from the primer terminus.. The enzyme catalyses 3'-end directed exonucleolytic cleavage of viral RNA-DNA hybrid.. It catalyses the reaction DNA(n) + a 2'-deoxyribonucleoside 5'-triphosphate = DNA(n+1) + diphosphate. Its activity is regulated as follows. The viral protease is inhibited by many synthetic protease inhibitors (PIs), such as amprenavir, atazanavir, indinavir, loprinavir, nelfinavir, ritonavir and saquinavir. RT can be inhibited either by nucleoside RT inhibitors (NRTIs) or by non nucleoside RT inhibitors (NNRTIs). NRTIs act as chain terminators, whereas NNRTIs inhibit DNA polymerization by binding a small hydrophobic pocket near the RT active site and inducing an allosteric change in this region. Classical NRTIs are abacavir, adefovir (PMEA), didanosine (ddI), lamivudine (3TC), stavudine (d4T), tenofovir (PMPA), zalcitabine (ddC), and zidovudine (AZT). Classical NNRTIs are atevirdine (BHAP U-87201E), delavirdine, efavirenz (DMP-266), emivirine (I-EBU), and nevirapine (BI-RG-587). The tritherapies used as a basic effective treatment of AIDS associate two NRTIs and one NNRTI. Use of protease inhibitors in tritherapy regimens permit more ambitious therapeutic strategies. Its function is as follows. Gag-Pol polyprotein and Gag polyprotein may regulate their own translation, by the binding genomic RNA in the 5'-UTR. At low concentration, Gag-Pol and Gag would promote translation, whereas at high concentration, the polyproteins encapsidate genomic RNA and then shut off translation. Matrix protein p17 has two main functions: in infected cell, it targets Gag and Gag-pol polyproteins to the plasma membrane via a multipartite membrane-binding signal, that includes its myristointegration complex. The myristoylation signal and the NLS exert conflicting influences its subcellular localization. The key regulation of these motifs might be phosphorylation of a portion of MA molecules on the C-terminal tyrosine at the time of virus maturation, by virion-associated cellular tyrosine kinase. Implicated in the release from host cell mediated by Vpu. Functionally, capsid protein p24 forms the conical core that encapsulates the genomic RNA-nucleocapsid complex in the virion. The core is constituted by capsid protein hexamer subunits. The core is disassembled soon after virion entry. Interaction with host PPIA/CYPA protects the virus from restriction by host TRIM5-alpha and from an unknown antiviral activity in host cells. This capsid restriction by TRIM5 is one of the factors which restricts SIV to the simian species. In terms of biological role, nucleocapsid protein p7 encapsulates and protects viral dimeric unspliced (genomic) RNA. Binds these RNAs through its zinc fingers. Facilitates rearangement of nucleic acid secondary structure during retrotranscription of genomic RNA. This capability is referred to as nucleic acid chaperone activity. Its function is as follows. The aspartyl protease mediates proteolytic cleavages of Gag and Gag-Pol polyproteins during or shortly after the release of the virion from the plasma membrane. Cleavages take place as an ordered, step-wise cascade to yield mature proteins. This process is called maturation. Displays maximal activity during the budding process just prior to particle release from the cell. Also cleaves Nef and Vif, probably concomitantly with viral structural proteins on maturation of virus particles. Hydrolyzes host EIF4GI and PABP1 in order to shut off the capped cellular mRNA translation. The resulting inhibition of cellular protein synthesis serves to ensure maximal viral gene expression and to evade host immune response. Reverse transcriptase/ribonuclease H (RT) is a multifunctional enzyme that converts the viral dimeric RNA genome into dsDNA in the cytoplasm, shortly after virus entry into the cell. This enzyme displays a DNA polymerase activity that can copy either DNA or RNA templates, and a ribonuclease H (RNase H) activity that cleaves the RNA strand of RNA-DNA heteroduplexes in a partially processive 3' to 5' endonucleasic mode. Conversion of viral genomic RNA into dsDNA requires many steps. A tRNA binds to the primer-binding site (PBS) situated at the 5'-end of the viral RNA. RT uses the 3' end of the tRNA primer to perform a short round of RNA-dependent minus-strand DNA synthesis. The reading proceeds through the U5 region and ends after the repeated (R) region which is present at both ends of viral RNA. The portion of the RNA-DNA heteroduplex is digested by the RNase H, resulting in a ssDNA product attached to the tRNA primer. This ssDNA/tRNA hybridizes with the identical R region situated at the 3' end of viral RNA. This template exchange, known as minus-strand DNA strong stop transfer, can be either intra- or intermolecular. RT uses the 3' end of this newly synthesized short ssDNA to perform the RNA-dependent minus-strand DNA synthesis of the whole template. RNase H digests the RNA template except for two polypurine tracts (PPTs) situated at the 5'-end and near the center of the genome. It is not clear if both polymerase and RNase H activities are simultaneous. RNase H can probably proceed both in a polymerase-dependent (RNA cut into small fragments by the same RT performing DNA synthesis) and a polymerase-independent mode (cleavage of remaining RNA fragments by free RTs). Secondly, RT performs DNA-directed plus-strand DNA synthesis using the PPTs that have not been removed by RNase H as primers. PPTs and tRNA primers are then removed by RNase H. The 3' and 5' ssDNA PBS regions hybridize to form a circular dsDNA intermediate. Strand displacement synthesis by RT to the PBS and PPT ends produces a blunt ended, linear dsDNA copy of the viral genome that includes long terminal repeats (LTRs) at both ends. Functionally, integrase catalyzes viral DNA integration into the host chromosome, by performing a series of DNA cutting and joining reactions. This enzyme activity takes place after virion entry into a cell and reverse transcription of the RNA genome in dsDNA. The first step in the integration process is 3' processing. This step requires a complex comprising the viral genome, matrix protein, Vpr and integrase. This complex is called the pre-integration complex (PIC). The integrase protein removes 2 nucleotides from each 3' end of the viral DNA, leaving recessed CA OH's at the 3' ends. In the second step, the PIC enters cell nucleus. This process is mediated through integrase and Vpr proteins, and allows the virus to infect a non dividing cell. This ability to enter the nucleus is specific of lentiviruses, other retroviruses cannot and rely on cell division to access cell chromosomes. In the third step, termed strand transfer, the integrase protein joins the previously processed 3' ends to the 5' ends of strands of target cellular DNA at the site of integration. The 5'-ends are produced by integrase-catalyzed staggered cuts, 5 bp apart. A Y-shaped, gapped, recombination intermediate results, with the 5'-ends of the viral DNA strands and the 3' ends of target DNA strands remaining unjoined, flanking a gap of 5 bp. The last step is viral DNA integration into host chromosome. This involves host DNA repair synthesis in which the 5 bp gaps between the unjoined strands are filled in and then ligated. Since this process occurs at both cuts flanking the SIV genome, a 5 bp duplication of host DNA is produced at the ends of SIV integration. Alternatively, Integrase may catalyze the excision of viral DNA just after strand transfer, this is termed disintegration. In Simian immunodeficiency virus agm.grivet (isolate AGM gr-1) (SIV-agm.gri), this protein is Gag-Pol polyprotein (gag-pol).